Here is an 86-residue protein sequence, read N- to C-terminus: Large ribosomal subunit protein bL31B (86 aa).

The protein belongs to the bacterial ribosomal protein bL31 family. Type B subfamily. Part of the 50S ribosomal subunit.

The chain is Large ribosomal subunit protein bL31B from Ralstonia pickettii (strain 12J).